The chain runs to 92 residues: MANTPSAKKRAKQAEKRRSHNASLRSMVRTYIKNVVKAIDAKDAEKAQAAYVLAVPVIDRMADKGIIHKNKAARHKGRLNGHIKALKEAAAA.

The tract at residues 1-23 (MANTPSAKKRAKQAEKRRSHNAS) is disordered. A compositionally biased stretch (basic residues) spans 7–20 (AKKRAKQAEKRRSH).

The protein belongs to the bacterial ribosomal protein bS20 family.

Functionally, binds directly to 16S ribosomal RNA. This is Small ribosomal subunit protein bS20 from Pseudomonas entomophila (strain L48).